We begin with the raw amino-acid sequence, 157 residues long: MINLIKKGDYVKVDYILEVDGKVIDTSIEEVAKENKIYYPEREYEPIGFIVGNGELIEGFEEAVIGMEVGEEKTVTIPPEKGYGLRDERLIQEIPKEMFADADFEPQEGMLILASGIPAKIIKVTDDTVTLDFNHELAGKELKFTIKVRDVQPAESE.

The 95-residue stretch at 1-95 folds into the PPIase FKBP-type domain; that stretch reads MINLIKKGDY…RDERLIQEIP (95 aa). Positions 86–137 are IF; that stretch reads RDERLIQEIPKEMFADADFEPQEGMLILASGIPAKIIKVTDDTVTLDFNHEL.

This sequence belongs to the FKBP-type PPIase family.

Its subcellular location is the cytoplasm. The catalysed reaction is [protein]-peptidylproline (omega=180) = [protein]-peptidylproline (omega=0). In terms of biological role, catalyzes the cis-trans isomerization of peptidyl prolyl bonds and accelerates protein folding. Also exhibits chaperone-like activity. This Methanocaldococcus jannaschii (strain ATCC 43067 / DSM 2661 / JAL-1 / JCM 10045 / NBRC 100440) (Methanococcus jannaschii) protein is Short-type peptidyl-prolyl cis-trans isomerase.